A 418-amino-acid polypeptide reads, in one-letter code: Triacylglycerol lipase 2 (418 aa).

Positions 1–31 (MAGSVMVPSVSIGLALSVLIFFALSLKTLEA) are cleaved as a signal peptide. An N-linked (GlcNAc...) asparagine glycan is attached at N158. S190 serves as the catalytic Nucleophile. N286 and N342 each carry an N-linked (GlcNAc...) asparagine glycan. Active-site charge relay system residues include D360 and H393.

The protein belongs to the AB hydrolase superfamily. Lipase family.

It is found in the secreted. It carries out the reaction a triacylglycerol + H2O = a diacylglycerol + a fatty acid + H(+). In terms of biological role, triacylglycerol (TAG) lipase. May be involved for TAG storage breakdown during seed germination. The protein is Triacylglycerol lipase 2 (LIP2) of Arabidopsis thaliana (Mouse-ear cress).